We begin with the raw amino-acid sequence, 136 residues long: Nodulation protein K (136 aa).

In Bradyrhizobium sp. (strain ANU 289), this protein is Nodulation protein K (nodK).